We begin with the raw amino-acid sequence, 113 residues long: Gamma-glutamylcyclotransferase family protein YtfP (113 aa).

The protein belongs to the gamma-glutamylcyclotransferase family.

The chain is Gamma-glutamylcyclotransferase family protein YtfP (ytfP) from Escherichia coli O157:H7.